A 129-amino-acid polypeptide reads, in one-letter code: NADH-quinone oxidoreductase subunit A (129 aa).

3 helical membrane-spanning segments follow: residues 14 to 34, 67 to 87, and 97 to 117; these read LAIH…VAAV, FLIA…FAWA, and GLIE…YLWI.

Belongs to the complex I subunit 3 family. As to quaternary structure, NDH-1 is composed of 14 different subunits. Subunits NuoA, H, J, K, L, M, N constitute the membrane sector of the complex.

It localises to the cell inner membrane. It catalyses the reaction a quinone + NADH + 5 H(+)(in) = a quinol + NAD(+) + 4 H(+)(out). Its function is as follows. NDH-1 shuttles electrons from NADH, via FMN and iron-sulfur (Fe-S) centers, to quinones in the respiratory chain. The immediate electron acceptor for the enzyme in this species is believed to be ubiquinone. Couples the redox reaction to proton translocation (for every two electrons transferred, four hydrogen ions are translocated across the cytoplasmic membrane), and thus conserves the redox energy in a proton gradient. The polypeptide is NADH-quinone oxidoreductase subunit A (Rhodopseudomonas palustris (strain BisB18)).